The following is a 234-amino-acid chain: Transcriptional activator protein TraR (234 aa).

The HTH luxR-type domain occupies 167–232 (TAEDAAWLDP…HLTALAIRRK (66 aa)). The segment at residues 191-210 (MEEIADVEGVKYNSVRVKLR) is a DNA-binding region (H-T-H motif).

It belongs to the autoinducer-regulated transcriptional regulatory protein family.

In terms of biological role, positive regulation of conjugal transfer of Ti plasmids. TraR activates target genes in the presence of AAI and also activates traR and traI themselves. The polypeptide is Transcriptional activator protein TraR (traR) (Rhizobium radiobacter (Agrobacterium tumefaciens)).